The sequence spans 331 residues: N-arachidonyl glycine receptor (331 aa).

At 1 to 26 (MITLNNQDQPVPFNSSHPDEYKIAAL) the chain is on the extracellular side. N14 carries an N-linked (GlcNAc...) asparagine glycan. The helical transmembrane segment at 27–47 (VFYSCIFIIGLFVNITALWVF) threads the bilayer. Topologically, residues 48–56 (SCTTKKRTT) are cytoplasmic. A helical transmembrane segment spans residues 57 to 77 (VTIYMMNVALVDLIFIMTLPF). The Extracellular portion of the chain corresponds to 78 to 95 (RMFYYAKDEWPFGEYFCQ). A disulfide bond links C94 and C172. Residues 96–116 (ILGALTVFYPSIALWLLAFIS) form a helical membrane-spanning segment. Topologically, residues 117 to 138 (ADRYMAIVQPKYAKELKNTCKA) are cytoplasmic. A helical membrane pass occupies residues 139–159 (VLACVGVWIMTLTTTTPLLLL). Residues 160–191 (YKDPDKDSTPATCLKISDIIYLKAVNVLNLTR) lie on the Extracellular side of the membrane. The chain crosses the membrane as a helical span at residues 192–212 (LTFFFLIPLFIMIGCYLVIIH). Residues 213-232 (NLLHGRTSKLKPKVKEKSIR) lie on the Cytoplasmic side of the membrane. The helical transmembrane segment at 233–253 (IIITLLVQVLVCFMPFHICFA) threads the bilayer. Residues 254-268 (FLMLGTGENSYNPWG) are Extracellular-facing. A helical membrane pass occupies residues 269 to 289 (AFTTFLMNLSTCLDVILYYIV). Topologically, residues 290–331 (SKQFQARVISVMLYRNYLRSMRRKSFRSGSLRSLSNINSEML) are cytoplasmic. Phosphoserine is present on S322.

It belongs to the G-protein coupled receptor 1 family. As to expression, expressed in midpiece of spermatozoon (at protein level). Most abundant in testis and spleen. Highly expressed in CD4 and CD8-positive T-cells as well as CD19-positive B-cells.

It is found in the cell membrane. It localises to the cytoplasmic vesicle membrane. In terms of biological role, g protein-coupled receptor (GPCR) that plays a role in diverse physiological processes particularly within the immune and nervous systems. Becomes active when triggered by various endogenous ligands including endocannabinoid N-arachidonyl glycine (NAGly), delta-9-tetrahydrocannabinol or resolvin D2/RvD2 derived from the omega-3 fatty acid docosahexaenoic acid (DHA). Upon RvD2 binding, facilitates the resolution of inflammation, aiding in tissue repair and homeostasis. Mechanistically, RvD2 ligation initiates Galphas protein coupling, activation of cAMP-PKA signaling pathway and phosphorylation of STAT3, leading to RvD2-stimulated macrophage phagocytosis. Mediates NAGly-induced process of reorganization of actin filaments and induction of acrosomal exocytosis. Activation by N-arachidonoyl glycine (NAGly) can also induce apoptosis in macrophages. Plays a role in homeostasis of CD8+ subsets of intraepithelial lymphocytes (IELs) (CD8alphaalpha and CD8alphabeta IELs) in small intestine by supporting preferential migration of CD8alphaalpha T-cells to intraepithelial compartment over lamina propria compartment, and by mediating their reconstitution into small intestine after bone marrow transplant. Also participates in hypotensive responses, mediating reduction in intraocular and blood pressure. This is N-arachidonyl glycine receptor (GPR18) from Homo sapiens (Human).